The following is a 200-amino-acid chain: Protein GrpE (200 aa).

Over residues 1–11 (MTDNDGQKDFS) the composition is skewed to basic and acidic residues. The interval 1–43 (MTDNDGQKDFSEAAAENAGSKPGEPRVSKPYIMPDDPEETPSE) is disordered.

This sequence belongs to the GrpE family. As to quaternary structure, homodimer.

It is found in the cytoplasm. Functionally, participates actively in the response to hyperosmotic and heat shock by preventing the aggregation of stress-denatured proteins, in association with DnaK and GrpE. It is the nucleotide exchange factor for DnaK and may function as a thermosensor. Unfolded proteins bind initially to DnaJ; upon interaction with the DnaJ-bound protein, DnaK hydrolyzes its bound ATP, resulting in the formation of a stable complex. GrpE releases ADP from DnaK; ATP binding to DnaK triggers the release of the substrate protein, thus completing the reaction cycle. Several rounds of ATP-dependent interactions between DnaJ, DnaK and GrpE are required for fully efficient folding. This is Protein GrpE from Afipia carboxidovorans (strain ATCC 49405 / DSM 1227 / KCTC 32145 / OM5) (Oligotropha carboxidovorans).